The chain runs to 375 residues: uncharacterized protein (375 aa).

The next 7 membrane-spanning stretches (helical) occupy residues 21–41 (LLLLIPLLVGLTLIIYGIVLF), 66–86 (IIVFVVGSIILFFTLASFCVS), 160–180 (LVGVLIALNLALSLIEIPGIV), 203–223 (LVGLLSTSLVALITPWLHLLI), 234–254 (FYMVNDFLVLWIFYFFFFHLF), 289–309 (VISFLCGFIEGLGFYFGYFLI), and 338–358 (FFLMTTTAIFSIKYIFEMLFF).

The protein resides in the cell membrane. This is an uncharacterized protein from Mycoplasma genitalium (strain ATCC 33530 / DSM 19775 / NCTC 10195 / G37) (Mycoplasmoides genitalium).